A 126-amino-acid chain; its full sequence is Histone H2B type 1-J (126 aa).

Residues 1 to 12 are compositionally biased toward low complexity; sequence MPEPAKSAPAPK. The disordered stretch occupies residues 1–35; sequence MPEPAKSAPAPKKGSKKAVTKAQKKDGKKRKRSRK. An N-acetylproline modification is found at P2. ADP-ribosyl glutamic acid is present on E3. An N6-(2-hydroxyisobutyryl)lysine; alternate modification is found at K6. The residue at position 6 (K6) is an N6-(beta-hydroxybutyryl)lysine; alternate. Position 6 is an N6-acetyllysine; alternate (K6). Position 6 is an N6-butyryllysine; alternate (K6). N6-crotonyllysine; alternate is present on K6. K6 carries the N6-lactoyllysine; alternate modification. K6 is covalently cross-linked (Glycyl lysine isopeptide (Lys-Gly) (interchain with G-Cter in SUMO2); alternate). The residue at position 7 (S7) is an ADP-ribosylserine. K12 is subject to N6-(beta-hydroxybutyryl)lysine; alternate. N6-acetyllysine; alternate is present on residues K12 and K13. K12 and K13 each carry N6-crotonyllysine; alternate. K12 is modified (N6-lactoyllysine; alternate). At K13 the chain carries N6-(2-hydroxyisobutyryl)lysine; alternate. Position 15 is a phosphoserine; by STK4/MST1 (S15). Residues K16, K17, K21, and K24 each carry the N6-acetyllysine; alternate modification. 4 positions are modified to N6-crotonyllysine; alternate: K16, K17, K21, and K24. 4 positions are modified to N6-lactoyllysine; alternate: K16, K17, K21, and K24. N6-(beta-hydroxybutyryl)lysine; alternate occurs at positions 17 and 21. K17 carries the post-translational modification N6-glutaryllysine; alternate. K21 and K24 each carry N6-(2-hydroxyisobutyryl)lysine; alternate. K21 is subject to N6-butyryllysine; alternate. K21 participates in a covalent cross-link: Glycyl lysine isopeptide (Lys-Gly) (interchain with G-Cter in SUMO2); alternate. An N6-(2-hydroxyisobutyryl)lysine modification is found at K25. An N6-(2-hydroxyisobutyryl)lysine; alternate modification is found at K35. K35 bears the N6-(beta-hydroxybutyryl)lysine; alternate mark. K35 bears the N6-crotonyllysine; alternate mark. The residue at position 35 (K35) is an N6-glutaryllysine; alternate. N6-succinyllysine; alternate is present on K35. K35 is covalently cross-linked (Glycyl lysine isopeptide (Lys-Gly) (interchain with G-Cter in ubiquitin); alternate). E36 carries the polyADP-ribosyl glutamic acid modification. S37 is modified (phosphoserine; by AMPK). N6-(2-hydroxyisobutyryl)lysine; alternate occurs at positions 44, 47, and 58. K44 bears the N6-lactoyllysine; alternate mark. K44 and K47 each carry N6-glutaryllysine; alternate. Position 47 is an N6-methyllysine; alternate (K47). K58 carries the post-translational modification N6,N6-dimethyllysine; alternate. R80 carries the dimethylated arginine modification. K86 carries the post-translational modification N6-(2-hydroxyisobutyryl)lysine; alternate. An N6-(beta-hydroxybutyryl)lysine; alternate modification is found at K86. Position 86 is an N6-acetyllysine; alternate (K86). K86 bears the N6-lactoyllysine; alternate mark. Residue K86 is modified to N6,N6,N6-trimethyllysine; alternate. Omega-N-methylarginine is present on residues R87 and R93. At K109 the chain carries N6-(2-hydroxyisobutyryl)lysine; alternate. K109 carries the N6-lactoyllysine; alternate modification. Residue K109 is modified to N6-glutaryllysine; alternate. K109 is subject to N6-methyllysine; alternate. S113 carries an O-linked (GlcNAc) serine glycan. The residue at position 116 (T116) is a Phosphothreonine. N6-(2-hydroxyisobutyryl)lysine; alternate occurs at positions 117 and 121. Residues K117 and K121 each carry the N6-(beta-hydroxybutyryl)lysine; alternate modification. N6-lactoyllysine; alternate occurs at positions 117 and 121. 2 positions are modified to N6-glutaryllysine; alternate: K117 and K121. N6-succinyllysine; alternate is present on residues K117 and K121. K117 carries the N6-malonyllysine; alternate modification. An N6-methylated lysine; alternate modification is found at K117. K121 participates in a covalent cross-link: Glycyl lysine isopeptide (Lys-Gly) (interchain with G-Cter in ubiquitin); alternate.

This sequence belongs to the histone H2B family. The nucleosome is a histone octamer containing two molecules each of H2A, H2B, H3 and H4 assembled in one H3-H4 heterotetramer and two H2A-H2B heterodimers. The octamer wraps approximately 147 bp of DNA. Heterodimer H2BC11 and H2AZ1 interacts with VPS72 (via N-terminal domain). In terms of processing, monoubiquitination at Lys-35 (H2BK34Ub) by the MSL1/MSL2 dimer is required for histone H3 'Lys-4' (H3K4me) and 'Lys-79' (H3K79me) methylation and transcription activation at specific gene loci, such as HOXA9 and MEIS1 loci. Similarly, monoubiquitination at Lys-121 (H2BK120Ub) by the RNF20/40 complex gives a specific tag for epigenetic transcriptional activation and is also prerequisite for histone H3 'Lys-4' and 'Lys-79' methylation. It also functions cooperatively with the FACT dimer to stimulate elongation by RNA polymerase II. H2BK120Ub also acts as a regulator of mRNA splicing: deubiquitination by USP49 is required for efficient cotranscriptional splicing of a large set of exons. Post-translationally, phosphorylation at Ser-37 (H2BS36ph) by AMPK in response to stress promotes transcription. Phosphorylated on Ser-15 (H2BS14ph) by STK4/MST1 during apoptosis; which facilitates apoptotic chromatin condensation. Also phosphorylated on Ser-15 in response to DNA double strand breaks (DSBs), and in correlation with somatic hypermutation and immunoglobulin class-switch recombination. GlcNAcylation at Ser-113 promotes monoubiquitination of Lys-121. It fluctuates in response to extracellular glucose, and associates with transcribed genes. In terms of processing, ADP-ribosylated by PARP1 or PARP2 on Ser-7 (H2BS6ADPr) in response to DNA damage. H2BS6ADPr promotes recruitment of CHD1L. Mono-ADP-ribosylated on Glu-3 (H2BE2ADPr) by PARP3 in response to single-strand breaks. Poly ADP-ribosylation on Glu-36 (H2BE35ADPr) by PARP1 regulates adipogenesis: it inhibits phosphorylation at Ser-37 (H2BS36ph), thereby blocking expression of pro-adipogenetic genes. Post-translationally, crotonylation (Kcr) is specifically present in male germ cells and marks testis-specific genes in post-meiotic cells, including X-linked genes that escape sex chromosome inactivation in haploid cells. Crotonylation marks active promoters and enhancers and confers resistance to transcriptional repressors. It is also associated with post-meiotically activated genes on autosomes. Lactylated in macrophages by EP300/P300 by using lactoyl-CoA directly derived from endogenous or exogenous lactate, leading to stimulates gene transcription.

The protein localises to the nucleus. Its subcellular location is the chromosome. Functionally, core component of nucleosome. Nucleosomes wrap and compact DNA into chromatin, limiting DNA accessibility to the cellular machineries which require DNA as a template. Histones thereby play a central role in transcription regulation, DNA repair, DNA replication and chromosomal stability. DNA accessibility is regulated via a complex set of post-translational modifications of histones, also called histone code, and nucleosome remodeling. In terms of biological role, has broad antibacterial activity. May contribute to the formation of the functional antimicrobial barrier of the colonic epithelium, and to the bactericidal activity of amniotic fluid. This is Histone H2B type 1-J from Homo sapiens (Human).